The chain runs to 683 residues: Methionine--tRNA ligase (683 aa).

The 'HIGH' region motif lies at 23–33; the sequence is PYANGSAHIGH. Zn(2+) contacts are provided by Cys-154, Cys-157, Cys-166, and Cys-170. Positions 335–339 match the 'KMSKS' region motif; that stretch reads KFSKS. Lys-338 lines the ATP pocket. A tRNA-binding domain is found at 583-683; the sequence is DFAKMELRVG…KPSEPGTKVR (101 aa).

Belongs to the class-I aminoacyl-tRNA synthetase family. MetG type 1 subfamily. In terms of assembly, homodimer. Requires Zn(2+) as cofactor.

It localises to the cytoplasm. It catalyses the reaction tRNA(Met) + L-methionine + ATP = L-methionyl-tRNA(Met) + AMP + diphosphate. Its function is as follows. Is required not only for elongation of protein synthesis but also for the initiation of all mRNA translation through initiator tRNA(fMet) aminoacylation. The protein is Methionine--tRNA ligase of Methanocella arvoryzae (strain DSM 22066 / NBRC 105507 / MRE50).